The following is a 208-amino-acid chain: Small ribosomal subunit protein uS4 (208 aa).

The interval 29 to 48 is disordered; the sequence is MERRPYGPGQHGRARRKQDS. The region spanning 95-155 is the S4 RNA-binding domain; it reads QRLDALVLRA…ERSEKMVPFQ (61 aa).

It belongs to the universal ribosomal protein uS4 family. As to quaternary structure, part of the 30S ribosomal subunit. Contacts protein S5. The interaction surface between S4 and S5 is involved in control of translational fidelity.

One of the primary rRNA binding proteins, it binds directly to 16S rRNA where it nucleates assembly of the body of the 30S subunit. In terms of biological role, with S5 and S12 plays an important role in translational accuracy. This is Small ribosomal subunit protein uS4 from Micrococcus luteus (strain ATCC 4698 / DSM 20030 / JCM 1464 / CCM 169 / CCUG 5858 / IAM 1056 / NBRC 3333 / NCIMB 9278 / NCTC 2665 / VKM Ac-2230) (Micrococcus lysodeikticus).